The sequence spans 379 residues: Presenilin-associated rhomboid-like protein, mitochondrial (379 aa).

A mitochondrion-targeting transit peptide spans 1-52 (MAWRGWAQRGWGCGQAWGASVGGRSCEELTAVLTPPQLLGRRFNFFIQQKCG). Residues 53–101 (FRKAPRKVEPRRSDPGTSGEAYKRSALIPPVEETVFYPSPYPIRSLIKP) are Mitochondrial matrix-facing. The residue at position 65 (serine 65) is a Phosphoserine. Residue threonine 69 is modified to Phosphothreonine. The residue at position 70 (serine 70) is a Phosphoserine. The helical transmembrane segment at 102 to 121 (LFFTVGFTGCAFGSAAIWQY) threads the bilayer. Topologically, residues 122–167 (ESLKSRVQSYFDGIKADWLDSIRPQKEGDFRKEINKWWNNLSDGQR) are mitochondrial intermembrane. Residues 168–187 (TVTGIIAANVLVFCLWRVPS) traverse the membrane as a helical segment. Topologically, residues 188-207 (LQRTMIRYFTSNPASKVLCS) are mitochondrial matrix. A helical transmembrane segment spans residues 208–230 (PMLLSTFSHFSLFHMAANMYVLW). The Mitochondrial intermembrane segment spans residues 231–244 (SFSSSIVNILGQEQ). Residues 245-262 (FMAVYLSAGVISNFVSYV) form a helical membrane-spanning segment. The Mitochondrial matrix segment spans residues 263-272 (GKVATGRYGP). Residues 273–289 (SLGASGAIMTVLAAVCT) form a helical membrane-spanning segment. The Nucleophile role is filled by serine 277. The Mitochondrial intermembrane portion of the chain corresponds to 290-295 (KIPEGR). The helical transmembrane segment at 296-318 (LAIIFLPMFTFTAGNALKAIIAM) threads the bilayer. At 319-332 (DTAGMILGWKFFDH) the chain is on the mitochondrial matrix side. The helical transmembrane segment at 333–354 (AAHLGGALFGIWYVTYGHELIW) threads the bilayer. Histidine 335 is a catalytic residue. At 355–379 (KNREPLVKIWHEIRTNGPKKGGGSK) the chain is on the mitochondrial intermembrane side.

This sequence belongs to the peptidase S54 family. In terms of assembly, interacts with PSEN1 and PSEN2. Binds OPA1. Post-translationally, P-beta is proteolytically processed (beta-cleavage) in a PARL-dependent manner. The cleavage is inhibited when residues Ser-65, Thr-69 and Ser-70 are all phosphorylated.

The protein resides in the mitochondrion inner membrane. It is found in the nucleus. It carries out the reaction Cleaves type-1 transmembrane domains using a catalytic dyad composed of serine and histidine that are contributed by different transmembrane domains.. Functionally, required for the control of apoptosis during postnatal growth. Essential for proteolytic processing of an antiapoptotic form of OPA1 which prevents the release of mitochondrial cytochrome c in response to intrinsic apoptotic signals. Required for the maturation of PINK1 into its 52kDa mature form after its cleavage by mitochondrial-processing peptidase (MPP). Promotes cleavage of serine/threonine-protein phosphatase PGAM5 in damaged mitochondria in response to loss of mitochondrial membrane potential. Mediates differential cleavage of PINK1 and PGAM5 depending on the health status of mitochondria, disassociating from PINK1 and associating with PGAM5 in response to mitochondrial membrane potential loss. Required for processing of CLPB into a form with higher protein disaggregase activity by removing an autoinhibitory N-terminal peptide. Promotes processing of DIABLO/SMAC in the mitochondrion which is required for DIABLO apoptotic activity. Also required for cleavage of STARD7 and TTC19. Promotes changes in mitochondria morphology regulated by phosphorylation of P-beta domain. The polypeptide is Presenilin-associated rhomboid-like protein, mitochondrial (PARL) (Homo sapiens (Human)).